Here is a 510-residue protein sequence, read N- to C-terminus: Aromatic-L-amino-acid decarboxylase (510 aa).

Over residues 1–17 the composition is skewed to polar residues; sequence MSHIPISNTIPTKQTDG. The interval 1–28 is disordered; that stretch reads MSHIPISNTIPTKQTDGNGKANISPDKL. Thr117 is a binding site for substrate. Residues Ala183, Ser184, His227, Asp305, and Asn334 each coordinate pyridoxal 5'-phosphate. His227 contributes to the substrate binding site. His227 is a catalytic residue. Lys337 carries the N6-(pyridoxal phosphate)lysine modification. A disordered region spans residues 358-384; sequence NAFNVDPLYLKHDMQGSAPDYRHWQIP.

It belongs to the group II decarboxylase family. Homodimer. Requires pyridoxal 5'-phosphate as cofactor. In terms of tissue distribution, hypoderm isoform is expressed only in hypodermal epithelium and the CNS isoform only in central nervous system. Expressed in the adult head (at protein level).

The catalysed reaction is L-dopa + H(+) = dopamine + CO2. It carries out the reaction 5-hydroxy-L-tryptophan + H(+) = serotonin + CO2. Functionally, catalyzes the decarboxylation of L-3,4-dihydroxyphenylalanine (L-DOPA) to dopamine and L-5-hydroxytryptophan (5-HTP) to serotonin. Catalyzes the formation of serotonin more efficiently than dopamine. Displays no activity to tyrosine. Variation in the synthesis of bioamines may be a factor contributing to natural variation in life span. The polypeptide is Aromatic-L-amino-acid decarboxylase (Ddc) (Drosophila melanogaster (Fruit fly)).